A 457-amino-acid chain; its full sequence is UDP-N-acetylmuramate--L-alanine ligase (457 aa).

112-118 provides a ligand contact to ATP; that stretch reads GTHGKTT.

It belongs to the MurCDEF family.

Its subcellular location is the cytoplasm. The enzyme catalyses UDP-N-acetyl-alpha-D-muramate + L-alanine + ATP = UDP-N-acetyl-alpha-D-muramoyl-L-alanine + ADP + phosphate + H(+). The protein operates within cell wall biogenesis; peptidoglycan biosynthesis. Functionally, cell wall formation. In Solidesulfovibrio magneticus (strain ATCC 700980 / DSM 13731 / RS-1) (Desulfovibrio magneticus), this protein is UDP-N-acetylmuramate--L-alanine ligase.